Consider the following 264-residue polypeptide: O-methyltransferase resE (264 aa).

Gln-97 and His-142 together coordinate S-adenosyl-L-methionine.

This sequence belongs to the methyltransferase superfamily.

It carries out the reaction desmethylrestrictinol + S-adenosyl-L-methionine = restrictinol + S-adenosyl-L-homocysteine + H(+). It participates in antifungal biosynthesis. In terms of biological role, O-methyltransferase; part of the gene cluster that mediates the biosynthesis of the tetrahydropyranyl antifungal agent restricticin that acts as an inhibitor of CYP51 and blocks the ergosterol biosynthesis. Within the pathway, resE uses S-adenosylmethionine to methylate position C4 of desmethylrestrictinol to produce restrictinol. The highly reducing polyketide synthase resH, the short chain dehydrogenase resG, the cyclase resF, the FAD-dependent monooxygenase resA and the enoylreductase resD are required to generate the first stable intermediate desmethylrestrictinol. ResH with resD biosynthesize the first polyketide chain intermediate that is reduced by resG, followed by epoxidation by resA before 6-endo cyclization via epoxide opening by resF leads to desmethylrestrictinol. The methyltransferase resE then catalyzes the C4 O-methylation of desmethylrestrictinol to produce restrictinol, and the nonribosomal peptide synthetase resC catalyzes the C3 esterification of restrictinol with glycine that leads to restricticin. In Aspergillus sclerotiorum, this protein is O-methyltransferase resE.